We begin with the raw amino-acid sequence, 656 residues long: MAKVIGIDLGTSNSAAAVVMGGKPTIIPAAEGATVGGKAFPSVVAFSKDGDLLVGEPARRQAVTNPENTIMAAKRKMGSEHIFKAGGKDYKPQQISSFILQKIKKDAEAFVGEPVGQAVITVPAYFDDNQRQATKDAGTIAGLDVVRIINEPTAASLAFGLDKSKQDMKILVFDFGGGTLDVTVMEMGGGVFEVMSTSGDTQLGGTDMDKAIIDYIVDDFRKREGVDLSQDSTALTRVREAAEKAKIELSTVMETDVNLPFISHDSSGPKNLELRLTRAKLEELVGPIIDRCRPSIEKALADAKVSPSDIAKIVMVGGPTRMPAVKKFVSSVTGKESESGVDPMEAVAMGAAIQAGIIAGDVTSDIVLLDVTPLTLGIDTLGGVREPLIERNTTIPTSKSKVFTTAVDNQTAVTIHVVQGERPMTSDNVSLGSFNLTDLPPAPRGIPQIEVKFDIDANGIINVTAKDLGTQKEAKITIESSSKLSKDEIEKLREDAEKFSDEDEKKKGKVELKNEAESFVYTAEKLINHDLKDKITQEQGIKISDGIREVKEALDQDPDILRPKLDSLKAMVNEITTEMYQQAAAQGAAGGAAGGAAGGAAGGAAGDAAGAAGDSTGDAAGAAGGPSEGPAGDAGAGESAGPEPGDDGQPKPGPAA.

The segment covering 590–605 (GGAAGGAAGGAAGGAA) has biased composition (gly residues). A disordered region spans residues 590 to 656 (GGAAGGAAGG…DGQPKPGPAA (67 aa)). Residues 606–621 (GDAAGAAGDSTGDAAG) show a composition bias toward low complexity. Gly residues predominate over residues 622–635 (AAGGPSEGPAGDAG).

This sequence belongs to the heat shock protein 70 family.

Functionally, acts as a chaperone. The protein is Chaperone protein DnaK of Cenarchaeum symbiosum (strain A).